The sequence spans 347 residues: Cytoplasmic tRNA 2-thiolation protein 1 (347 aa).

Phosphoserine is present on Ser200. Residues 315–347 (LAIGKGRRGLDEEGPPREPQPSRPLTSEPVPDF) are disordered.

This sequence belongs to the TtcA family. CTU1/NCS6/ATPBD3 subfamily. Component of a complex at least composed of URM1, CTU2/NCS2 and CTU1/ATPBD3. May form a heterodimer with CTU2/NCS2.

The protein resides in the cytoplasm. The protein operates within tRNA modification; 5-methoxycarbonylmethyl-2-thiouridine-tRNA biosynthesis. Its function is as follows. Plays a central role in 2-thiolation of mcm(5)S(2)U at tRNA wobble positions of tRNA(Lys), tRNA(Glu) and tRNA(Gln). Directly binds tRNAs and probably acts by catalyzing adenylation of tRNAs, an intermediate required for 2-thiolation. It is unclear whether it acts as a sulfurtransferase that transfers sulfur from thiocarboxylated URM1 onto the uridine of tRNAs at wobble position. The polypeptide is Cytoplasmic tRNA 2-thiolation protein 1 (Bos taurus (Bovine)).